The sequence spans 200 residues: 3-isopropylmalate dehydratase small subunit (200 aa).

This sequence belongs to the LeuD family. LeuD type 1 subfamily. As to quaternary structure, heterodimer of LeuC and LeuD.

It catalyses the reaction (2R,3S)-3-isopropylmalate = (2S)-2-isopropylmalate. It participates in amino-acid biosynthesis; L-leucine biosynthesis; L-leucine from 3-methyl-2-oxobutanoate: step 2/4. Functionally, catalyzes the isomerization between 2-isopropylmalate and 3-isopropylmalate, via the formation of 2-isopropylmaleate. The polypeptide is 3-isopropylmalate dehydratase small subunit (Haemophilus influenzae (strain PittEE)).